The chain runs to 386 residues: Methionine aminopeptidase 1 (386 aa).

Residue A2 is modified to N-acetylalanine. The C6H2-type zinc finger occupies T6–K59. Positions 9, 14, 22, 25, 36, 40, 48, and 52 each coordinate Zn(2+). H203 contributes to the a protein binding site. Residues D220, D231, and H294 each coordinate Zn(2+). H301 contributes to the a protein binding site. Residues E327 and E358 each coordinate Zn(2+).

Belongs to the peptidase M24A family. Methionine aminopeptidase type 1 subfamily. As to quaternary structure, associates with the 60S ribosomal subunit of the 80S translational complex. Zn(2+) is required as a cofactor. The cofactor is Co(2+). It depends on Mn(2+) as a cofactor. Requires Fe(2+) as cofactor.

The protein resides in the cytoplasm. The enzyme catalyses Release of N-terminal amino acids, preferentially methionine, from peptides and arylamides.. Cotranslationally removes the N-terminal methionine from nascent proteins. The N-terminal methionine is often cleaved when the second residue in the primary sequence is small and uncharged (Met-Ala-, Cys, Gly, Pro, Ser, Thr, or Val). In Pongo abelii (Sumatran orangutan), this protein is Methionine aminopeptidase 1 (METAP1).